Here is an 80-residue protein sequence, read N- to C-terminus: MSEQTVEQKLSAEIVTLKSRILDTQDQAARLMEESKILQGTLAEIARAVGITGDTIKVEEIVEAVKNLTAESADEAKDEE.

Homotrimer. Homohexamer.

Chaperone essential for folding and oligomerization of both long and short tail fibers. Required for the assembly of gp34, gp36 and gp37 (components of the long tail fiber) and p12 (the subunit of the short tail fiber). Together with gp38, participates in the formation of the distal part of the long fibers. This chain is Tail fiber assembly helper protein (57), found in Escherichia coli (Bacteriophage T4).